The primary structure comprises 326 residues: Vascular endothelial growth factor D (326 aa).

A signal peptide spans 1–21; that stretch reads MYGEWAAVNILMMSYVYLVQG. Positions 22 to 93 are excised as a propeptide; the sequence is FSIEHRAVKD…SRSTSHRSTR (72 aa). Intrachain disulfides connect Cys-116-Cys-158, Cys-147-Cys-194, and Cys-151-Cys-196. Asn-160 and Asn-190 each carry an N-linked (GlcNAc...) asparagine glycan. A propeptide spanning residues 211–326 is cleaved from the precursor; the sequence is SIQIPEEDQC…CRSMVFSLSP (116 aa). Residues 227-242 form a 1; approximate repeat; it reads CPVDMLWDNTKCKCVL. The segment at 227 to 317 is 4 X 16 AA repeats of C-X(10)-C-X-C-X(1,3)-C; it reads CPVDMLWDNT…KHKMFHPDTC (91 aa). Repeat copies occupy residues 263 to 278 and 282 to 298. N-linked (GlcNAc...) asparagine glycosylation occurs at Asn-292. One copy of the 4; truncated repeat lies at 306-317; sequence CQKHKMFHPDTC.

This sequence belongs to the PDGF/VEGF growth factor family. In terms of assembly, homodimer; non-covalent and antiparallel. Undergoes a complex proteolytic maturation which generates a variety of processed secreted forms with increased activity toward VEGFR-3 and VEGFR-2. VEGF-D first form an antiparallel homodimer linked by disulfide bonds before secretion. The fully processed VEGF-D is composed mostly of two VEGF homology domains (VHDs) bound by non-covalent interactions. In terms of tissue distribution, highly expressed in the spleen, kidney, lung, tongue, ovary and mammary gland.

Its subcellular location is the secreted. Functionally, growth factor active in angiogenesis, lymphangiogenesis and endothelial cell growth, stimulating their proliferation and migration and also has effects on the permeability of blood vessels. May function in the formation of the venous and lymphatic vascular systems during embryogenesis, and also in the maintenance of differentiated lymphatic endothelium in adults. Binds and activates VEGFR-3 (Flt4) receptor. This chain is Vascular endothelial growth factor D, found in Rattus norvegicus (Rat).